A 531-amino-acid polypeptide reads, in one-letter code: Beta-hexosaminidase subunit beta (531 aa).

Residues 1–21 form the signal peptide; that stretch reads MEVLPGLLRLLAALVVAERWA. A disulfide bridge connects residues Cys67 and Cys111. Asn120, Asn164, and Asn301 each carry an N-linked (GlcNAc...) asparagine glycan. Disulfide bonds link Cys283-Cys334 and Cys508-Cys525. Glu329 (proton donor) is an active-site residue.

This sequence belongs to the glycosyl hydrolase 20 family. There are 3 forms of beta-hexosaminidase: hexosaminidase A is a heterodimer composed of one subunit alpha and one subunit beta (chain A and B); hexosaminidase B is a homodimer of two beta subunits (two chains A and B); hexosaminidase S is a homodimer of two alpha subunits. The composition of the dimer (isozyme A versus isozyme S) has a significant effect on the substrate specificity of the alpha subunit active site.

It localises to the lysosome. It is found in the cytoplasmic vesicle. Its subcellular location is the secretory vesicle. The protein resides in the cortical granule. It catalyses the reaction Hydrolysis of terminal non-reducing N-acetyl-D-hexosamine residues in N-acetyl-beta-D-hexosaminides.. The catalysed reaction is N-acetyl-beta-D-galactosaminyl-(1-&gt;4)-beta-D-3-sulfogalactosyl-(1-&gt;4)-beta-D-glucosyl-(1&lt;-&gt;1')-ceramide + H2O = a beta-D-3-sulfogalactosyl-(1-&gt;4)-beta-D-glucosyl-(1&lt;-&gt;1')-ceramide + N-acetyl-beta-D-galactosamine. It carries out the reaction a ganglioside GM2 (d18:1(4E)) + H2O = a ganglioside GM3 (d18:1(4E)) + N-acetyl-beta-D-galactosamine. The enzyme catalyses a ganglioside GM2 + H2O = a ganglioside GM3 + N-acetyl-beta-D-galactosamine. It catalyses the reaction beta-D-GalNAc-(1-&gt;4)-alpha-L-IdoA-(1-&gt;3)-beta-D-GalNAc-4-sulfate-(1-&gt;4)-alpha-L-IdoA-(1-&gt;3)-D-GalNAc-4-sulfate + H2O = alpha-L-IdoA-(1-&gt;3)-beta-D-GalNAc-4-sulfate-(1-&gt;4)-alpha-L-IdoA-(1-&gt;3)-D-GalNAc-4-sulfate + N-acetyl-D-galactosamine. The catalysed reaction is N-acetyl-beta-D-6-sulfogalactosaminyl-(1-&gt;4)-alpha-L-iduronyl-(1-&gt;3)-N-acetyl-D-6-sulfogalactosamine + H2O = alpha-L-iduronyl-(1-&gt;3)-N-acetyl-D-6-sulfogalactosamine + N-acetyl-D-6-sulfogalactosamine. Its activity is regulated as follows. Addition of GM2A stimulates the hydrolysis of sulfated glycosphingolipid SM2 and the ganglioside GM2. Functionally, hydrolyzes the non-reducing end N-acetyl-D-hexosamine and/or sulfated N-acetyl-D-hexosamine of glycoconjugates, such as the oligosaccharide moieties from proteins and neutral glycolipids, or from certain mucopolysaccharides. The isozyme B does not hydrolyze each of these substrates, however hydrolyzes efficiently neutral oligosaccharide. Only the isozyme A is responsible for the degradation of GM2 gangliosides in the presence of GM2A. During fertilization is responsible, at least in part, for the zona block to polyspermy. Present in the cortical granules of non-activated oocytes, is exocytosed during the cortical reaction in response to oocyte activation and inactivates the sperm galactosyltransferase-binding site, accounting for the block in sperm binding to the zona pellucida. The sequence is that of Beta-hexosaminidase subunit beta from Sus scrofa (Pig).